The primary structure comprises 262 residues: uncharacterized protein (262 aa).

The S4 RNA-binding domain maps to 6–70 (LRINQFLAHY…LKNKKFSVLV (65 aa)). Catalysis depends on Asp108, which acts as the Nucleophile.

Belongs to the pseudouridine synthase RsuA family.

It carries out the reaction a uridine in RNA = a pseudouridine in RNA. This is an uncharacterized protein from Helicobacter pylori (strain ATCC 700392 / 26695) (Campylobacter pylori).